Consider the following 199-residue polypeptide: Hematopoietic prostaglandin D synthase (199 aa).

The 78-residue stretch at 2 to 79 (PNYKLTYFNM…YLTKNTDLAG (78 aa)) folds into the GST N-terminal domain. Residues tyrosine 8, arginine 14, tryptophan 39, 49–51 (GKI), and 63–64 (QS) each bind glutathione. Residues 81–199 (TEMEQCHVDA…WIKRRPQTKL (119 aa)) form the GST C-terminal domain.

The protein belongs to the GST superfamily. Sigma family. Homodimer. It depends on glutathione as a cofactor. In terms of tissue distribution, expressed in a number of megakaryocytic cell lines but not in platelets. Highly expressed in adipose tissue, macrophages and placenta. Also expressed at lower levels in lung, heart, lymph nodes, appendix, bone marrow and fetal liver.

It localises to the cytoplasm. The catalysed reaction is prostaglandin H2 = prostaglandin D2. It carries out the reaction RX + glutathione = an S-substituted glutathione + a halide anion + H(+). The enzyme catalyses 2-glyceryl-prostaglandin H2 = 2-glyceryl-prostaglandin D2. Prostaglandin PGD2 synthesis is stimulated by calcium and magnesium ions. One calcium or magnesium ion is bound between the subunits of the homodimer. The interactions with the protein are for the most part mediated via water molecules. Magnesium increases the affinity for glutathione, while calcium has no effect on the affinity for glutathione. In terms of biological role, bifunctional enzyme which catalyzes both the conversion of PGH2 to PGD2, a prostaglandin involved in smooth muscle contraction/relaxation and a potent inhibitor of platelet aggregation, and the conjugation of glutathione with a wide range of aryl halides and organic isothiocyanates. Also exhibits low glutathione-peroxidase activity towards cumene hydroperoxide. In Homo sapiens (Human), this protein is Hematopoietic prostaglandin D synthase.